Reading from the N-terminus, the 976-residue chain is Vacuolar membrane protease (976 aa).

Topologically, residues 1–51 (MPLSTGLTLSSLNVMEKADNHYNMMTKQPPALSPVDMVSSRRGFNPIAFTP) are cytoplasmic. A helical transmembrane segment spans residues 52-72 (WPVTILSSLVYLAFIIPIIVV). Over 73 to 399 (HHLVPPAPKE…DNGNDGKLNN (327 aa)) the chain is Vacuolar. 2 N-linked (GlcNAc...) asparagine glycosylation sites follow: Asn147 and Asn150. Zn(2+)-binding residues include His206 and Asp218. Glu252 serves as the catalytic Proton acceptor. 3 residues coordinate Zn(2+): Glu253, Glu278, and His351. A helical transmembrane segment spans residues 400–420 (GAGTLGVWFDFYGSSFAVFEL). The Cytoplasmic segment spans residues 421 to 427 (NTLFGHS). The chain crosses the membrane as a helical span at residues 428–448 (VALLVVAPLLLIATCVTLYTL). The Vacuolar portion of the chain corresponds to 449-477 (DKMYMFSMYTYLSESGGQVSLYGLRGLFR). Residues 478–498 (FPLILGISTALTIGLAFLLMK) form a helical membrane-spanning segment. Residues 499–519 (ANPFIIYSSPYAVWNPSALHR) are Cytoplasmic-facing. The helical transmembrane segment at 520 to 540 (AYAFTWMFGMMWVLLVIATVY) threads the bilayer. The Vacuolar portion of the chain corresponds to 541-550 (QKQHGIASSY). The helical transmembrane segment at 551 to 571 (FIVFYFAGVSIATWISYLELF) threads the bilayer. At 572-675 (GLPTTQDYAR…HRLEQRWSIN (104 aa)) the chain is on the cytoplasmic side. Residues 590–633 (TPSSDSRLLAPSADELPPSGSAAGHDFNPEDVEDEEPTESTSLL) form a disordered region. Residues 618–627 (PEDVEDEEPT) show a composition bias toward acidic residues. Residues 676 to 696 (LISSAWILQFLFVAPIVIILL) form a helical membrane-spanning segment. The Vacuolar segment spans residues 697–718 (GQLGLFLTSATYQIGADGGSQL). Residues 719–739 (VIYVGIAVLSVLILLPLFPFI) traverse the membrane as a helical segment. Over 740-745 (HRFTYH) the chain is Cytoplasmic. Residues 746 to 766 (IPTFLLFVLIGTLVYNLTAFP) traverse the membrane as a helical segment. At 767–976 (FSHSNRLKVA…LVEGSHSFKL (210 aa)) the chain is on the vacuolar side. Asn848 carries an N-linked (GlcNAc...) asparagine glycan.

Belongs to the peptidase M28 family. Requires Zn(2+) as cofactor.

Its subcellular location is the vacuole membrane. Functionally, may be involved in vacuolar sorting and osmoregulation. This is Vacuolar membrane protease from Arthroderma otae (strain ATCC MYA-4605 / CBS 113480) (Microsporum canis).